We begin with the raw amino-acid sequence, 117 residues long: Gamma-aminobutyric acid receptor-associated protein-like 1 (117 aa).

G116 is lipidated: Phosphatidylethanolamine amidated glycine; alternate. A lipid anchor (Phosphatidylserine amidated glycine; alternate) is attached at G116. K117 is a propeptide (removed in mature form).

The protein belongs to the ATG8 family. Interacts with ATG13, OPRK1, RB1CC1 and ULK1. Interacts with TP53INP1 and TP53INP2. Directly interacts with SQSTM1. Interacts with ATG3, ATG7 and MAP15. Interacts with TECPR2. Interacts with TBC1D5. Interacts with MAPK15. Interacts with TRIM5. Interacts with MEFV and TRIM21. Interacts with WDFY3. Interacts with the reticulophagy receptor TEX264. Interacts with UBA5. Interacts with KBTBD6 and KBTBD7; the interaction is direct. Interacts with reticulophagy regulators RETREG1, RETREG2 and RETREG3. Interacts with IRGM. Interacts with DNM2. Interacts with NCOA4 (via C-terminus). Post-translationally, the precursor molecule is cleaved by ATG4 (ATG4A, ATG4B, ATG4C or ATG4D) to expose the glycine at the C-terminus and form the cytosolic form, GABARAPL1-I. The processed form is then activated by APG7L/ATG7, transferred to ATG3 and conjugated to phosphatidylethanolamine (PE) phospholipid to form the membrane-bound form, GABARAPL1-II. During non-canonical autophagy, the processed form is conjugated to phosphatidylserine (PS) phospholipid. ATG4 proteins also mediate the delipidation of PE-conjugated forms required for GABARAPL1 recycling when autophagosomes fuse with lysosomes. In addition, ATG4B and ATG4D mediate delipidation of ATG8 proteins conjugated to PS during non-canonical autophagy. ATG4B constitutes the major protein for proteolytic activation. ATG4D is the main enzyme for delipidation activity.

Its subcellular location is the cytoplasmic vesicle. It localises to the autophagosome. The protein localises to the cytoplasmic vesicle membrane. It is found in the cytoplasm. The protein resides in the cytoskeleton. Its subcellular location is the endoplasmic reticulum. It localises to the golgi apparatus. Ubiquitin-like modifier that increases cell-surface expression of kappa-type opioid receptor through facilitating anterograde intracellular trafficking of the receptor. Involved in formation of autophagosomal vacuoles. While LC3s are involved in elongation of the phagophore membrane, the GABARAP/GATE-16 subfamily is essential for a later stage in autophagosome maturation. Through its interaction with the reticulophagy receptor TEX264, participates in the remodeling of subdomains of the endoplasmic reticulum into autophagosomes upon nutrient stress, which then fuse with lysosomes for endoplasmic reticulum turnover. The protein is Gamma-aminobutyric acid receptor-associated protein-like 1 of Bos taurus (Bovine).